A 96-amino-acid polypeptide reads, in one-letter code: Large ribosomal subunit protein uL23 (96 aa).

It belongs to the universal ribosomal protein uL23 family. As to quaternary structure, part of the 50S ribosomal subunit. Contacts protein L29, and trigger factor when it is bound to the ribosome.

In terms of biological role, one of the early assembly proteins it binds 23S rRNA. One of the proteins that surrounds the polypeptide exit tunnel on the outside of the ribosome. Forms the main docking site for trigger factor binding to the ribosome. The polypeptide is Large ribosomal subunit protein uL23 (Caldicellulosiruptor bescii (strain ATCC BAA-1888 / DSM 6725 / KCTC 15123 / Z-1320) (Anaerocellum thermophilum)).